A 462-amino-acid polypeptide reads, in one-letter code: tRNA modification GTPase MnmE (462 aa).

The (6S)-5-formyl-5,6,7,8-tetrahydrofolate site is built by Arg-27, Glu-89, and Arg-128. The 161-residue stretch at 223–383 folds into the TrmE-type G domain; it reads GLKIAIVGRP…LEAAILAAVG (161 aa). Asn-233 contacts K(+). GTP is bound by residues 233-238, 252-258, and 277-280; these read NVGKSS, TDLPGTT, and DTAG. Ser-237 provides a ligand contact to Mg(2+). 3 residues coordinate K(+): Thr-252, Leu-254, and Thr-257. Thr-258 contributes to the Mg(2+) binding site. Lys-462 serves as a coordination point for (6S)-5-formyl-5,6,7,8-tetrahydrofolate.

This sequence belongs to the TRAFAC class TrmE-Era-EngA-EngB-Septin-like GTPase superfamily. TrmE GTPase family. As to quaternary structure, homodimer. Heterotetramer of two MnmE and two MnmG subunits. Requires K(+) as cofactor.

Its subcellular location is the cytoplasm. Functionally, exhibits a very high intrinsic GTPase hydrolysis rate. Involved in the addition of a carboxymethylaminomethyl (cmnm) group at the wobble position (U34) of certain tRNAs, forming tRNA-cmnm(5)s(2)U34. This Synechococcus elongatus (strain ATCC 33912 / PCC 7942 / FACHB-805) (Anacystis nidulans R2) protein is tRNA modification GTPase MnmE.